Here is a 151-residue protein sequence, read N- to C-terminus: Phospholipase A2 inhibitor BjussuMIP (151 aa).

An N-terminal signal peptide occupies residues 1–4 (LANG). The C-type lectin domain maps to 31–146 (LKYAFLTVHK…CDENLLVVCE (116 aa)). Cystine bridges form between Cys-68-Cys-145 and Cys-123-Cys-137. An N-linked (GlcNAc...) asparagine glycan is attached at Asn-107.

It belongs to the alpha-type phospholipase A2 inhibitor family. In terms of assembly, oligomer. As to expression, expressed by the liver.

It is found in the secreted. Inhibits enzymatic, anticoagulant, edema formation, myotoxicity activities induced by snakes phospholipase A2. Is oligomeric, but it is probable that each of its subunits can bind and inactive a PLA2 molecule. This chain is Phospholipase A2 inhibitor BjussuMIP, found in Bothrops jararacussu (Jararacussu).